Here is a 33-residue protein sequence, read N- to C-terminus: Neutrophil defensin 1 (33 aa).

3 disulfides stabilise this stretch: cysteine 3-cysteine 31, cysteine 5-cysteine 20, and cysteine 10-cysteine 30.

It belongs to the alpha-defensin family.

The protein localises to the secreted. Anti-fungal and bactericidal activity, greater against Gram-positive bacteria. This chain is Neutrophil defensin 1, found in Mesocricetus auratus (Golden hamster).